The following is a 476-amino-acid chain: Probable secreted beta-glucosidase SIM1 (476 aa).

Positions 1-19 (MKFSTAVTTLISSGAIVSA) are cleaved as a signal peptide. Residues 111-203 (ATASTSQGAS…SSSSSSSGSG (93 aa)) are compositionally biased toward low complexity. The interval 111–214 (ATASTSQGAS…IYGDLADFSG (104 aa)) is disordered. A glycan (N-linked (GlcNAc...) asparagine) is linked at Asn-423.

The protein belongs to the SUN family.

It is found in the secreted. The protein localises to the cell wall. Functionally, involved in the remodeling of the cell wall during the various phases of yeast culture development and under various environmental conditions. Required for the maintenance of the CLB5 kinase activity. The sequence is that of Probable secreted beta-glucosidase SIM1 (SIM1) from Saccharomyces cerevisiae (strain ATCC 204508 / S288c) (Baker's yeast).